Consider the following 262-residue polypeptide: Shikimate dehydrogenase (NADP(+)) (262 aa).

Shikimate-binding positions include 15-17 and Thr62; that span reads SRS. Lys66 functions as the Proton acceptor in the catalytic mechanism. Glu78 contributes to the NADP(+) binding site. Residues Asn87 and Asp102 each coordinate shikimate. NADP(+) contacts are provided by residues 126–130, 150–155, and Met214; these read GAGGA and NRTQQR. Residue Tyr216 participates in shikimate binding. Gly236 provides a ligand contact to NADP(+).

Belongs to the shikimate dehydrogenase family. As to quaternary structure, homodimer.

It carries out the reaction shikimate + NADP(+) = 3-dehydroshikimate + NADPH + H(+). It functions in the pathway metabolic intermediate biosynthesis; chorismate biosynthesis; chorismate from D-erythrose 4-phosphate and phosphoenolpyruvate: step 4/7. Its function is as follows. Involved in the biosynthesis of the chorismate, which leads to the biosynthesis of aromatic amino acids. Catalyzes the reversible NADPH linked reduction of 3-dehydroshikimate (DHSA) to yield shikimate (SA). This is Shikimate dehydrogenase (NADP(+)) from Acinetobacter baylyi (strain ATCC 33305 / BD413 / ADP1).